Reading from the N-terminus, the 167-residue chain is MAMSPALRNSVMAAISGGAIAIASVLITGPGGNDGLEGVRYKPYKDVVGVLTVCYGHTGKDIMPGKTYTEAECKALLNKDLITVARQINPYIKVDIPETTRGALYSFVYNVGAGNFRTSTLLRKINQGDIKGACDQLRRWTYAGGKQWKGLMTRREVERDVCLWGKQ.

Residues 10 to 32 traverse the membrane as a helical; Signal-anchor for type II membrane protein segment; the sequence is SVMAAISGGAIAIASVLITGPGG. Catalysis depends on proton donor/acceptor residues Glu37 and Asp46.

It belongs to the glycosyl hydrolase 24 family.

It is found in the host cell inner membrane. The catalysed reaction is Hydrolysis of (1-&gt;4)-beta-linkages between N-acetylmuramic acid and N-acetyl-D-glucosamine residues in a peptidoglycan and between N-acetyl-D-glucosamine residues in chitodextrins.. In terms of biological role, signal-arrest-release (SAR) endolysin with lysozyme activity that degrades host peptidoglycans and participates with the pinholin and spanin proteins in the sequential events which lead to programmed host cell lysis releasing the mature viral particles. Once the pinholin has permeabilized the host cell membrane, the SAR-endolysin is released into the periplasm where it breaks down the peptidoglycan layer. The polypeptide is SAR-endolysin (19) (Bacteriophage PS119).